The chain runs to 160 residues: Nascent polypeptide-associated complex subunit beta (160 aa).

Disordered regions lie at residues 16–36 (GGKG…GTDD) and 118–160 (ESYQ…TEVE). The span at 20-30 (TPRRKVKKVHK) shows a compositional bias: basic residues. The NAC-A/B domain occupies 33 to 98 (GTDDKKLQTA…GEDKELTELV (66 aa)). The span at 124–134 (QKEKGEDGDKK) shows a compositional bias: basic and acidic residues. Residues 135 to 145 (DDDDEDDDDIP) are compositionally biased toward acidic residues.

The protein belongs to the NAC-beta family. As to quaternary structure, part of the nascent polypeptide-associated complex (NAC), consisting of EGD2 and EGD1. NAC associates with ribosomes via EGD1.

The protein localises to the cytoplasm. Its subcellular location is the nucleus. Component of the nascent polypeptide-associated complex (NAC), a dynamic component of the ribosomal exit tunnel, protecting the emerging polypeptides from interaction with other cytoplasmic proteins to ensure appropriate nascent protein targeting. The NAC complex also promotes mitochondrial protein import by enhancing productive ribosome interactions with the outer mitochondrial membrane and blocks the inappropriate interaction of ribosomes translating non-secretory nascent polypeptides with translocation sites in the membrane of the endoplasmic reticulum. EGD1 may act as a transcription factor that exert a negative effect on the expression of several genes that are transcribed by RNA polymerase II. The chain is Nascent polypeptide-associated complex subunit beta (EGD1) from Phaeosphaeria nodorum (strain SN15 / ATCC MYA-4574 / FGSC 10173) (Glume blotch fungus).